Here is a 142-residue protein sequence, read N- to C-terminus: SLSDKDKAAVRALWSTISKSSDAIGNDALSRMIVVYPQTKIYFSHWPEVIPGSIHIKEHGKKVMGGIELAVSKIDDLKTGLFELSEQHAFKLRVDPGNFKILNHCILVVIATMFPKEFTPEAHVSLDKFLSGVALALAERYR.

Residue serine 1 is modified to N-acetylserine. In terms of domain architecture, Globin spans 1-142 (SLSDKDKAAV…VALALAERYR (142 aa)). Position 59 (histidine 59) interacts with O2. Heme b is bound at residue histidine 88.

This sequence belongs to the globin family. As to quaternary structure, heterotetramer of two alpha chains and two beta chains. In terms of tissue distribution, red blood cells.

Functionally, involved in oxygen transport from gills to the various peripheral tissues. This chain is Hemoglobin subunit alpha (hba), found in Gymnodraco acuticeps (Antarctic dragonfish).